The primary structure comprises 132 residues: Small ribosomal subunit protein uS8 (132 aa).

Belongs to the universal ribosomal protein uS8 family. As to quaternary structure, part of the 30S ribosomal subunit. Contacts proteins S5 and S12.

One of the primary rRNA binding proteins, it binds directly to 16S rRNA central domain where it helps coordinate assembly of the platform of the 30S subunit. This is Small ribosomal subunit protein uS8 from Corynebacterium diphtheriae (strain ATCC 700971 / NCTC 13129 / Biotype gravis).